The primary structure comprises 459 residues: MGSQATTYHMAMYPWFGVGHLTGFFRLANKLAGKGHRISFLIPKNTQSKLESFNLHPHLISFVPIVVPSIPGLPPGAETTSDVPFPSTHLLMEAMDKTQNDIEIILKDLKVDVVFYDFTHWLPSLARKIGIKSVFYSTISPLMHGYALSPERRVVGKQLTEADMMKAPASFPDPSIKLHAHEARGFTARTVMKFGGDITFFDRIFTAVSESDGLAYSTCREIEGQFCDYIETQFQKPVLLAGPALPVPSKSTMEQKWSDWLGKFKEGSVIYCAFGSECTLRKDKFQELLWGLELTGMPFFAALKPPFETESVEAAIPEELKEKIQGRGIVHGEWVQQQLFLQHPSVGCFVSHCGWASLSEALVNDCQIVLLPQVGDQIINARIMSVSLKVGVEVEKGEEDGVFSRESVCKAVKAVMDEKSEIGREVRGNHDKLRGFLMNADLDSKYMDSFNQKLQDLLG.

The Proton acceptor role is filled by His20. Position 20 (His20) interacts with an anthocyanidin. Residue Asp117 is the Charge relay of the active site. Residues Thr138, Val335, Gln337, His352, Trp355, Ser357, and Glu360 each contribute to the UDP-alpha-D-glucose site. Gly375 is a binding site for an anthocyanidin. Asp376 and Gln377 together coordinate UDP-alpha-D-glucose.

The protein belongs to the UDP-glycosyltransferase family.

The catalysed reaction is an anthocyanidin 3-O-beta-D-glucoside + UDP-alpha-D-glucose = an anthocyanidin 3-O-sophoroside + UDP + 2 H(+). The protein operates within pigment biosynthesis; anthocyanin biosynthesis. In terms of biological role, glycosyltransferase that mediates the glucosylation of anthocyanidin 3-O-glucosides to yield anthocyanidin 3-O-sophorosides. 3-O-sophoroside derivatives are required for the color of flowers. This Ipomoea purpurea (Common morning glory) protein is Anthocyanidin 3-O-glucoside 2''-O-glucosyltransferase (3GGT).